Here is a 29-residue protein sequence, read N- to C-terminus: Cuticle protein 36 (29 aa).

In terms of biological role, component of the cuticle of migratory locust which contains more than 100 different structural proteins. The sequence is that of Cuticle protein 36 from Locusta migratoria (Migratory locust).